The primary structure comprises 347 residues: tRNA pseudouridine synthase D (347 aa).

The Nucleophile role is filled by Asp81. The TRUD domain maps to 158–304 (GVPNYFGNQR…MRHDRRAIAL (147 aa)).

Belongs to the pseudouridine synthase TruD family.

The enzyme catalyses uridine(13) in tRNA = pseudouridine(13) in tRNA. Responsible for synthesis of pseudouridine from uracil-13 in transfer RNAs. The protein is tRNA pseudouridine synthase D of Vibrio vulnificus (strain CMCP6).